A 195-amino-acid chain; its full sequence is Protein GrpE (195 aa).

The protein belongs to the GrpE family. In terms of assembly, homodimer.

It localises to the cytoplasm. Participates actively in the response to hyperosmotic and heat shock by preventing the aggregation of stress-denatured proteins, in association with DnaK and GrpE. It is the nucleotide exchange factor for DnaK and may function as a thermosensor. Unfolded proteins bind initially to DnaJ; upon interaction with the DnaJ-bound protein, DnaK hydrolyzes its bound ATP, resulting in the formation of a stable complex. GrpE releases ADP from DnaK; ATP binding to DnaK triggers the release of the substrate protein, thus completing the reaction cycle. Several rounds of ATP-dependent interactions between DnaJ, DnaK and GrpE are required for fully efficient folding. The chain is Protein GrpE from Blochmanniella pennsylvanica (strain BPEN).